The chain runs to 125 residues: Small ribosomal subunit protein uS12 (125 aa).

Aspartate 89 is subject to 3-methylthioaspartic acid.

It belongs to the universal ribosomal protein uS12 family. As to quaternary structure, part of the 30S ribosomal subunit. Contacts proteins S8 and S17. May interact with IF1 in the 30S initiation complex.

Its function is as follows. With S4 and S5 plays an important role in translational accuracy. Functionally, interacts with and stabilizes bases of the 16S rRNA that are involved in tRNA selection in the A site and with the mRNA backbone. Located at the interface of the 30S and 50S subunits, it traverses the body of the 30S subunit contacting proteins on the other side and probably holding the rRNA structure together. The combined cluster of proteins S8, S12 and S17 appears to hold together the shoulder and platform of the 30S subunit. The polypeptide is Small ribosomal subunit protein uS12 (Clostridium botulinum (strain Alaska E43 / Type E3)).